Here is a 58-residue protein sequence, read N- to C-terminus: Large ribosomal subunit protein bL32 (58 aa).

The tract at residues 1–23 (MAVPARHTSSAKKNRRRTHYKLT) is disordered. The span at 9–20 (SSAKKNRRRTHY) shows a compositional bias: basic residues.

Belongs to the bacterial ribosomal protein bL32 family.

The polypeptide is Large ribosomal subunit protein bL32 (rpmF) (Lactococcus lactis subsp. cremoris (Streptococcus cremoris)).